The sequence spans 908 residues: Protein O-mannosyltransferase 1 (908 aa).

2 disordered regions span residues 1–85 (MYNN…SAIN) and 115–160 (GSVE…SGSR). The span at 21–31 (QRRKTTTRSRS) shows a compositional bias: basic residues. 2 stretches are compositionally biased toward polar residues: residues 39–54 (CTSENVIEKNQTNGAQ) and 132–149 (LTATPTTTPKQASPSPTI). A helical membrane pass occupies residues 190–210 (FTVNLSIDLFSWTLFLLAFCT). N-linked (GlcNAc...) asparagine glycosylation is present at Asn-265. Transmembrane regions (helical) follow at residues 279-299 (VPIFWFRFIPALCGSLLAPAV), 311-328 (WAAALGGLLVVLDNSLLT), 331-351 (RFVLMESMLLLASTLGIACLL), 370-390 (AGVLLACAGAVKYIGFLALAL), and 418-438 (LSRLLLFVGIPIAVYIGVFYV). MIR domains follow at residues 473 to 534 (PLAV…VKRP), 545 to 602 (PDVI…VEIL), and 608 to 664 (GDSW…VEEH). The next 4 helical transmembrane spans lie at 749 to 769 (VLIWYTASAGILVYATLLAFY), 788 to 808 (FLMAGDTFFVGYMMHYLPYYF), 813 to 833 (LFLHNYLPAFVFKLLLLCFVV), and 857 to 877 (LALLLWLLAVGSVFVKFLPLS).

Belongs to the glycosyltransferase 39 family. As to quaternary structure, interacts with tw/POMT2.

It localises to the endoplasmic reticulum membrane. It carries out the reaction a di-trans,poly-cis-dolichyl beta-D-mannosyl phosphate + L-seryl-[protein] = 3-O-(alpha-D-mannosyl)-L-seryl-[protein] + a di-trans,poly-cis-dolichyl phosphate + H(+). The catalysed reaction is a di-trans,poly-cis-dolichyl beta-D-mannosyl phosphate + L-threonyl-[protein] = 3-O-(alpha-D-mannosyl)-L-threonyl-[protein] + a di-trans,poly-cis-dolichyl phosphate + H(+). It functions in the pathway protein modification; protein glycosylation. Its function is as follows. Rt/POMT1 and tw/POMT2 function as a protein O-mannosyltransferase in association with each other to generate and maintain normal muscle development. The polypeptide is Protein O-mannosyltransferase 1 (Drosophila pseudoobscura pseudoobscura (Fruit fly)).